Here is a 471-residue protein sequence, read N- to C-terminus: Putative multidrug resistance protein MdtD (471 aa).

The Periplasmic portion of the chain corresponds to 1–11; that stretch reads MTDLPDSTRWQ. Residues 12 to 32 traverse the membrane as a helical segment; the sequence is LWIVAFGFFMQSLDTTIVNTA. Residues 33–48 lie on the Cytoplasmic side of the membrane; it reads LPSMAQSLGESPLHMH. A helical membrane pass occupies residues 49–69; the sequence is MVIVSYVLTVAVMLPASGWLA. Topologically, residues 70–76 are periplasmic; the sequence is DKVGVRN. A helical membrane pass occupies residues 77 to 97; the sequence is IFFTAIVLFTLGSLFCALSGT. Residues 98 to 101 are Cytoplasmic-facing; sequence LNEL. Residues 102–124 traverse the membrane as a helical segment; the sequence is LLARALQGVGGAMMVPVGRLTVM. The Periplasmic segment spans residues 125–137; it reads KIVPREQYMAAMT. Residues 138 to 158 form a helical membrane-spanning segment; sequence FVTLPGQVGPLLGPALGGLLV. The Cytoplasmic segment spans residues 159 to 164; the sequence is EYASWH. Residues 165–185 form a helical membrane-spanning segment; it reads WIFLINIPVGIIGAIATLMLM. Residues 186 to 196 lie on the Periplasmic side of the membrane; the sequence is PNYTMQTRRFD. The helical transmembrane segment at 197 to 217 threads the bilayer; sequence LSGFLLLAVGMAVLTLALDGS. Residues 218 to 224 are Cytoplasmic-facing; the sequence is KGTGLSP. The helical transmembrane segment at 225 to 245 threads the bilayer; sequence LTIDGLVAVGVVALVLYLLHA. Residues 246–262 are Periplasmic-facing; that stretch reads RNNNRALFSLKLFRTRT. A helical membrane pass occupies residues 263–283; the sequence is FSLGLAGSFAGRIGSGMLPFM. Residues 284-285 lie on the Cytoplasmic side of the membrane; that stretch reads TP. A helical membrane pass occupies residues 286-306; it reads VFLQIGLGFSPFHAGLMMIPM. The Periplasmic portion of the chain corresponds to 307–341; the sequence is VLGSMGMKRIVVQVVNRFGYRRVLVATTLGLSLVT. A helical transmembrane segment spans residues 342 to 362; sequence LLFMTTALLGWYYVLPFVLFL. At 363-395 the chain is on the cytoplasmic side; sequence QGMVNSTRFSSMNTLTLKDLPDNLASSGNSLLS. A helical membrane pass occupies residues 396-416; sequence MIMQLSMSIGVTIAGLLLGLF. Over 417 to 430 the chain is Periplasmic; it reads GSQHVSVDSGTTQT. Residues 431–451 traverse the membrane as a helical segment; the sequence is VFMYTWLSMAFIIALPAFIFA. Over 452–471 the chain is Cytoplasmic; that stretch reads RVPNDTHQNVAISRRKRSAQ.

This sequence belongs to the major facilitator superfamily. TCR/Tet family.

Its subcellular location is the cell inner membrane. The protein is Putative multidrug resistance protein MdtD of Escherichia coli O8 (strain IAI1).